Consider the following 296-residue polypeptide: 4-hydroxybenzoate octaprenyltransferase (296 aa).

8 consecutive transmembrane segments (helical) span residues 29–49 (IGIYLLLWPTLWSLWIAADGV), 55–75 (LLIFVLGVILMRAAGCVINDF), 102–122 (AWITFAVLVALSFGLVLLTNA), 146–166 (YYPQVVLGAAYSWGILMAFTA), 169–189 (GELPASAWLLFLANVLWTVAY), 219–239 (LIIGSLQGLTLLLLALAGSRF), 241–261 (LGLYFYLGLAVAAACFVWEAW), and 275–295 (FLHNHWAGLAIFLGTVADYAL).

It belongs to the UbiA prenyltransferase family. Mg(2+) is required as a cofactor.

It is found in the cell inner membrane. It catalyses the reaction all-trans-octaprenyl diphosphate + 4-hydroxybenzoate = 4-hydroxy-3-(all-trans-octaprenyl)benzoate + diphosphate. It functions in the pathway cofactor biosynthesis; ubiquinone biosynthesis. Catalyzes the prenylation of para-hydroxybenzoate (PHB) with an all-trans polyprenyl group. Mediates the second step in the final reaction sequence of ubiquinone-8 (UQ-8) biosynthesis, which is the condensation of the polyisoprenoid side chain with PHB, generating the first membrane-bound Q intermediate 3-octaprenyl-4-hydroxybenzoate. This Pseudomonas aeruginosa (strain UCBPP-PA14) protein is 4-hydroxybenzoate octaprenyltransferase.